Here is an 84-residue protein sequence, read N- to C-terminus: ATP synthase subunit c (84 aa).

The next 2 helical transmembrane spans lie at 9 to 29 (IIGA…GFAI) and 54 to 74 (IVAG…LLFI).

Belongs to the ATPase C chain family. In terms of assembly, F-type ATPases have 2 components, F(1) - the catalytic core - and F(0) - the membrane proton channel. F(1) has five subunits: alpha(3), beta(3), gamma(1), delta(1), epsilon(1). F(0) has three main subunits: a(1), b(2) and c(10-14). The alpha and beta chains form an alternating ring which encloses part of the gamma chain. F(1) is attached to F(0) by a central stalk formed by the gamma and epsilon chains, while a peripheral stalk is formed by the delta and b chains.

The protein resides in the cell inner membrane. F(1)F(0) ATP synthase produces ATP from ADP in the presence of a proton or sodium gradient. F-type ATPases consist of two structural domains, F(1) containing the extramembraneous catalytic core and F(0) containing the membrane proton channel, linked together by a central stalk and a peripheral stalk. During catalysis, ATP synthesis in the catalytic domain of F(1) is coupled via a rotary mechanism of the central stalk subunits to proton translocation. Its function is as follows. Key component of the F(0) channel; it plays a direct role in translocation across the membrane. A homomeric c-ring of between 10-14 subunits forms the central stalk rotor element with the F(1) delta and epsilon subunits. This chain is ATP synthase subunit c, found in Haemophilus influenzae (strain ATCC 51907 / DSM 11121 / KW20 / Rd).